Here is a 357-residue protein sequence, read N- to C-terminus: Dynein axonemal assembly factor 10 (357 aa).

WD repeat units follow at residues 63–105 (EKAK…MPVY), 115–154 (NAID…DPVA), 162–205 (ENKR…LRWE), 207–249 (NIKN…PTKG), 257–297 (AHKS…QRSK), and 319–357 (LSTQ…LNKI).

As to quaternary structure, component of the PAQosome complex which is responsible for the biogenesis of several protein complexes and which consists of R2TP complex members RUVBL1, RUVBL2, RPAP3 and PIH1D1, URI complex members PFDN2, PFDN6, PDRG1, UXT and URI1 as well as ASDURF, POLR2E and DNAAF10/WDR92. Interacts with PIH1D1; the interaction associates DNAAF10 with the R2TP complex. Interacts with several dynein axonemal assembly factors. Widely expressed with the highest expression in testis.

Its subcellular location is the dynein axonemal particle. In terms of biological role, key assembly factor specifically required for the stability of axonemal dynein heavy chains in cytoplasm. This chain is Dynein axonemal assembly factor 10, found in Homo sapiens (Human).